The primary structure comprises 146 residues: Nucleoside diphosphate kinase (146 aa).

Residues K11, F59, R87, T93, R104, and N114 each contribute to the ATP site. The Pros-phosphohistidine intermediate role is filled by H117.

Belongs to the NDK family. Homotetramer. Mg(2+) serves as cofactor.

It localises to the cytoplasm. It carries out the reaction a 2'-deoxyribonucleoside 5'-diphosphate + ATP = a 2'-deoxyribonucleoside 5'-triphosphate + ADP. The catalysed reaction is a ribonucleoside 5'-diphosphate + ATP = a ribonucleoside 5'-triphosphate + ADP. In terms of biological role, major role in the synthesis of nucleoside triphosphates other than ATP. The ATP gamma phosphate is transferred to the NDP beta phosphate via a ping-pong mechanism, using a phosphorylated active-site intermediate. This chain is Nucleoside diphosphate kinase, found in Anaeromyxobacter sp. (strain Fw109-5).